Here is a 235-residue protein sequence, read N- to C-terminus: uncharacterized protein (235 aa).

It to E.coli YbeU.

This is an uncharacterized protein from Escherichia coli (strain K12).